Here is an 888-residue protein sequence, read N- to C-terminus: Microtubule-associated protein 10 (888 aa).

Disordered regions lie at residues 398-454, 508-602, 620-642, 654-683, and 699-836; these read EHKG…VTKG, SLAA…TSLR, NILR…DPAV, QVKA…ELQC, and TENN…YEPS. The span at 524–541 shows a compositional bias: polar residues; sequence LTDSNGKVSSWAVQSQLP. Over residues 572 to 589 the composition is skewed to basic and acidic residues; the sequence is ESSRTREAKQSHAMKKET. A compositionally biased stretch (polar residues) spans 590–600; that stretch reads VGQSENKTVTS. Composition is skewed to polar residues over residues 661-683, 699-714, 722-745, 772-786, and 825-836; these read ADTN…ELQC, TENN…SSTG, SWAS…SSVF, EASS…SQWT, and ARTSQVSSYEPS.

As to quaternary structure, interacts (via middle region) with microtubules.

The protein resides in the cytoplasm. The protein localises to the cytoskeleton. It is found in the spindle pole. It localises to the microtubule organizing center. Its subcellular location is the centrosome. The protein resides in the midbody. In terms of biological role, microtubule-associated protein (MAP) that plays a role in the regulation of cell division; promotes microtubule stability and participates in the organization of the spindle midzone and normal progress of cytokinesis. The sequence is that of Microtubule-associated protein 10 (Map10) from Rattus norvegicus (Rat).